The primary structure comprises 388 residues: 4-hydroxy-3-methylbut-2-en-1-yl diphosphate synthase (flavodoxin) (388 aa).

Cysteine 281, cysteine 284, cysteine 316, and glutamate 323 together coordinate [4Fe-4S] cluster.

This sequence belongs to the IspG family. [4Fe-4S] cluster is required as a cofactor.

The catalysed reaction is (2E)-4-hydroxy-3-methylbut-2-enyl diphosphate + oxidized [flavodoxin] + H2O + 2 H(+) = 2-C-methyl-D-erythritol 2,4-cyclic diphosphate + reduced [flavodoxin]. The protein operates within isoprenoid biosynthesis; isopentenyl diphosphate biosynthesis via DXP pathway; isopentenyl diphosphate from 1-deoxy-D-xylulose 5-phosphate: step 5/6. In terms of biological role, converts 2C-methyl-D-erythritol 2,4-cyclodiphosphate (ME-2,4cPP) into 1-hydroxy-2-methyl-2-(E)-butenyl 4-diphosphate. The protein is 4-hydroxy-3-methylbut-2-en-1-yl diphosphate synthase (flavodoxin) of Pseudarthrobacter chlorophenolicus (strain ATCC 700700 / DSM 12829 / CIP 107037 / JCM 12360 / KCTC 9906 / NCIMB 13794 / A6) (Arthrobacter chlorophenolicus).